A 503-amino-acid chain; its full sequence is tRNA-guanine(15) transglycosylase (503 aa).

The active-site Nucleophile is the aspartate 86. Residue aspartate 121 participates in substrate binding. Zn(2+)-binding residues include cysteine 278, cysteine 280, and cysteine 283.

It belongs to the archaeosine tRNA-ribosyltransferase family. It depends on Zn(2+) as a cofactor.

It carries out the reaction guanosine(15) in tRNA + 7-cyano-7-deazaguanine = 7-cyano-7-carbaguanosine(15) in tRNA + guanine. Its pathway is tRNA modification; archaeosine-tRNA biosynthesis. Functionally, exchanges the guanine residue with 7-cyano-7-deazaguanine (preQ0) at position 15 in the dihydrouridine loop (D-loop) of archaeal tRNAs. The polypeptide is tRNA-guanine(15) transglycosylase (Saccharolobus solfataricus (strain ATCC 35092 / DSM 1617 / JCM 11322 / P2) (Sulfolobus solfataricus)).